An 89-amino-acid chain; its full sequence is Small ribosomal subunit protein uS15 (89 aa).

The protein belongs to the universal ribosomal protein uS15 family. In terms of assembly, part of the 30S ribosomal subunit. Forms a bridge to the 50S subunit in the 70S ribosome, contacting the 23S rRNA.

In terms of biological role, one of the primary rRNA binding proteins, it binds directly to 16S rRNA where it helps nucleate assembly of the platform of the 30S subunit by binding and bridging several RNA helices of the 16S rRNA. Functionally, forms an intersubunit bridge (bridge B4) with the 23S rRNA of the 50S subunit in the ribosome. The sequence is that of Small ribosomal subunit protein uS15 from Corynebacterium diphtheriae (strain ATCC 700971 / NCTC 13129 / Biotype gravis).